The following is a 436-amino-acid chain: Fibrinogen gamma chain (436 aa).

Positions 1 to 25 (MSWSLQPPSFLLCCLLLLFSPTGLA) are cleaved as a signal peptide. Asn-77 carries N-linked (GlcNAc...) asparagine glycosylation. In terms of domain architecture, Fibrinogen C-terminal spans 169 to 415 (QIHDTTGKDC…ETTMKIIPFN (247 aa)). Cys-178 and Cys-207 form a disulfide bridge. 3 residues coordinate Ca(2+): Asp-343, Asp-345, and Gly-349. Cys-351 and Cys-364 are oxidised to a cystine. Gln-423 participates in a covalent cross-link: Isoglutamyl lysine isopeptide (Gln-Lys) (interchain with K-431). Ser-430 bears the Phosphoserine mark. Residue Lys-431 forms an Isoglutamyl lysine isopeptide (Lys-Gln) (interchain with Q-423) linkage.

Heterohexamer; disulfide linked. Contains 2 sets of 3 non-identical chains (alpha, beta and gamma). The 2 heterotrimers are in head to head conformation with the N-termini in a small central domain. In terms of processing, conversion of fibrinogen to fibrin is triggered by thrombin, which cleaves fibrinopeptides A and B from alpha and beta chains, and thus exposes the N-terminal polymerization sites responsible for the formation of the soft clot. The soft clot is converted into the hard clot by factor XIIIA which catalyzes the epsilon-(gamma-glutamyl)lysine cross-linking between gamma chains (stronger) and between alpha chains (weaker) of different monomers.

It is found in the secreted. Functionally, together with fibrinogen alpha (FGA) and fibrinogen beta (FGB), polymerizes to form an insoluble fibrin matrix. Fibrin has a major function in hemostasis as one of the primary components of blood clots. In addition, functions during the early stages of wound repair to stabilize the lesion and guide cell migration during re-epithelialization. Was originally thought to be essential for platelet aggregation, based on in vitro studies using anticoagulated blood. However, subsequent studies have shown that it is not absolutely required for thrombus formation in vivo. Enhances expression of SELP in activated platelets via an ITGB3-dependent pathway. Maternal fibrinogen is essential for successful pregnancy. Fibrin deposition is also associated with infection, where it protects against IFNG-mediated hemorrhage. May also facilitate the immune response via both innate and T-cell mediated pathways. The protein is Fibrinogen gamma chain (Fgg) of Mus musculus (Mouse).